The following is a 250-amino-acid chain: Sugar fermentation stimulation protein homolog (250 aa).

This sequence belongs to the SfsA family.

This is Sugar fermentation stimulation protein homolog from Synechococcus sp. (strain CC9311).